We begin with the raw amino-acid sequence, 201 residues long: Putative Ras-related protein Rab-1C (201 aa).

GTP-binding positions include 15–23, 33–40, and 63–67; these read GDSGVGKSC, YTESYIST, and DTAGQ. The Effector region motif lies at 37–45; sequence YISTIGVDF. Serine 76 is subject to (Microbial infection) O-(2-cholinephosphoryl)serine. GTP contacts are provided by residues 121–124 and 151–153; these read NKSD and SAK. The tract at residues 174-201 is disordered; the sequence is GPGAASGGERPNLKIDSTPVKPAGGGCC. S-geranylgeranyl cysteine attachment occurs at residues cysteine 200 and cysteine 201.

It belongs to the small GTPase superfamily. Rab family. (Microbial infection) Phosphocholinated at Ser-76 by L.pneumophila AnkX, leading to displace GDP dissociation inhibitors (GDI). Both GDP-bound and GTP-bound forms can be phosphocholinated. Dephosphocholinated by L.pneumophila Lem3, restoring accessibility to L.pneumophila GTPase effector LepB. Post-translationally, (Microbial infection) Glycosylated by S.typhimurium protein Ssek3: arginine GlcNAcylation prevents GTPase activity, thereby disrupting vesicular protein transport from the endoplasmic reticulum (ER) to the Golgi compartment.

The protein localises to the membrane. It is found in the cytoplasm. The enzyme catalyses GTP + H2O = GDP + phosphate + H(+). In terms of biological role, protein transport. Probably involved in vesicular traffic. This chain is Putative Ras-related protein Rab-1C (RAB1C), found in Homo sapiens (Human).